The primary structure comprises 238 residues: ATP synthase subunit a (238 aa).

Helical transmembrane passes span 18–38, 75–95, 112–132, 179–199, and 203–223; these read LTIL…VFWA, YSLL…LGLM, NFGV…IEGI, VVTG…PLAF, and IVWT…FIIL.

The protein belongs to the ATPase A chain family. As to quaternary structure, F-type ATPases have 2 components, CF(1) - the catalytic core - and CF(0) - the membrane proton channel. CF(1) has five subunits: alpha(3), beta(3), gamma(1), delta(1), epsilon(1). CF(0) has three main subunits: a(1), b(2) and c(9-12). The alpha and beta chains form an alternating ring which encloses part of the gamma chain. CF(1) is attached to CF(0) by a central stalk formed by the gamma and epsilon chains, while a peripheral stalk is formed by the delta and b chains.

The protein resides in the cell membrane. Functionally, key component of the proton channel; it plays a direct role in the translocation of protons across the membrane. This chain is ATP synthase subunit a, found in Streptococcus agalactiae serotype III (strain NEM316).